The primary structure comprises 630 residues: 1-deoxy-D-xylulose-5-phosphate synthase (630 aa).

Residues H80 and 121 to 123 (GHS) contribute to the thiamine diphosphate site. Position 152 (D152) interacts with Mg(2+). Thiamine diphosphate contacts are provided by residues 153–154 (GA), N181, Y288, and E370. A Mg(2+)-binding site is contributed by N181.

Belongs to the transketolase family. DXPS subfamily. Homodimer. It depends on Mg(2+) as a cofactor. Thiamine diphosphate serves as cofactor.

The enzyme catalyses D-glyceraldehyde 3-phosphate + pyruvate + H(+) = 1-deoxy-D-xylulose 5-phosphate + CO2. The protein operates within metabolic intermediate biosynthesis; 1-deoxy-D-xylulose 5-phosphate biosynthesis; 1-deoxy-D-xylulose 5-phosphate from D-glyceraldehyde 3-phosphate and pyruvate: step 1/1. Its function is as follows. Catalyzes the acyloin condensation reaction between C atoms 2 and 3 of pyruvate and glyceraldehyde 3-phosphate to yield 1-deoxy-D-xylulose-5-phosphate (DXP). The protein is 1-deoxy-D-xylulose-5-phosphate synthase of Colwellia psychrerythraea (strain 34H / ATCC BAA-681) (Vibrio psychroerythus).